The primary structure comprises 87 residues: Xibalbin-2 (87 aa).

The N-terminal stretch at 1 to 25 is a signal peptide; that stretch reads MKGVCTRKVLYFFMAVILFVAIVAS. Residues 26–45 constitute a propeptide that is removed on maturation; it reads EDTENRNPAMAMPLQRMEQE.

The protein belongs to the xibalbin-2 family. Post-translationally, contains 5 disulfide bonds. As to expression, expressed by the venom gland. Not found in the whole body.

The protein localises to the secreted. Its function is as follows. Probable neurotoxin. Moderately inhibits voltage-gated potassium channels (Kv1.1/KCNA1, Kv1.2/KCNA2, Kv1.3/KCNA3, and Kv1.6/KCNA6, with the highest toxicity against Kv1.6 (73.2% inhibition at 1 uM)) and weakly inhibits sodium channels (Nav1.4/SCN4A). Does not activate protein kinase A type II (PKA-II) and MAP kinase Erk1/2 in sensory neurons. Does not show cytotoxic activity. Does not have an impact on Ca2+, cAMP, and NO signaling in the cell types analyzed. Does not interfere with the adhesion of leukocytes to endothelial cells. In terms of biological role, moderately inhibits voltage-gated potassium channels (Kv1.1/KCNA1, Kv1.2/KCNA2, Kv1.3/KCNA3, and Kv1.6/KCNA6, with the highest toxicity against Kv1.6 (75.9% inhibition at 1 uM)). Does not activate protein kinase A type II (PKA-II) and MAP kinase Erk1/2 in sensory neurons. Does not show cytotoxic activity. Does not have an impact on Ca2+, cAMP, and NO signaling in the cell types analyzed. Does not interfere with the adhesion of leukocytes to endothelial cells. The polypeptide is Xibalbin-2 (Xibalbanus tulumensis (Blind cave remipede)).